The following is a 488-amino-acid chain: Envelope glycoprotein gp62 (488 aa).

The first 20 residues, 1–20 (MGKFLATLILFFQFCPLIFG), serve as a signal peptide directing secretion. The Extracellular portion of the chain corresponds to 21 to 442 (DYSPSCCTLT…LGLSQWAREA (422 aa)). N-linked (GlcNAc...) asparagine; by host glycans are attached at residues Asn140 and Asn222. The CXXC motif lies at 225-228 (CIVC). 2 N-linked (GlcNAc...) asparagine; by host glycosylation sites follow: Asn244 and Asn272. Positions 313 to 333 (AVPVAVWLVSALAMGAGVAGG) are fusion peptide. Coiled coils occupy residues 341-387 (ASGK…LLFW) and 397-429 (QEQC…GWGL). The immunosuppression stretch occupies residues 376–392 (AQNRRGLDLLFWEQGGL). Cys393 and Cys400 are oxidised to a cystine. N-linked (GlcNAc...) asparagine; by host glycosylation is present at Asn404. A helical transmembrane segment spans residues 443–463 (LQTGITLVALLLLVILAGPCI). A lipid anchor (S-palmitoyl cysteine; by host) is attached at Cys462. At 464–488 (LRQLRHLPSRVRYPHYSLIKPESSL) the chain is on the cytoplasmic side.

The mature envelope protein (Env) consists of a trimer of SU-TM heterodimers attached by non-covalent interactions or by a labile interchain disulfide bond. Post-translationally, specific enzymatic cleavages in vivo yield mature proteins. Envelope glycoproteins are synthesized as an inactive precursor that is N-glycosylated and processed likely by host cell furin or by a furin-like protease in the Golgi to yield the mature SU and TM proteins. The cleavage site between SU and TM requires the minimal sequence [KR]-X-[KR]-R. The transmembrane protein is palmitoylated.

The protein localises to the virion membrane. Its subcellular location is the host cell membrane. The surface protein (SU) attaches the virus to the host cell by binding to its receptor. This interaction triggers the refolding of the transmembrane protein (TM) and is thought to activate its fusogenic potential by unmasking its fusion peptide. Fusion occurs at the host cell plasma membrane. Functionally, the transmembrane protein (TM) acts as a class I viral fusion protein. Under the current model, the protein has at least 3 conformational states: pre-fusion native state, pre-hairpin intermediate state, and post-fusion hairpin state. During viral and target cell membrane fusion, the coiled coil regions (heptad repeats) assume a trimer-of-hairpins structure, positioning the fusion peptide in close proximity to the C-terminal region of the ectodomain. The formation of this structure appears to drive apposition and subsequent fusion of viral and target cell membranes. Membranes fusion leads to delivery of the nucleocapsid into the cytoplasm. The sequence is that of Envelope glycoprotein gp62 (env) from Homo sapiens (Human).